The following is a 161-amino-acid chain: Protein shisa-like-2B (161 aa).

A helical membrane pass occupies residues 65–85 (IGALIGLGIAALVLLAFVISV). A disordered region spans residues 115 to 134 (QEGNSNRKSKAPRSNAASNS).

This sequence belongs to the shisa family.

It is found in the membrane. The polypeptide is Protein shisa-like-2B (SHISAL2B) (Bos taurus (Bovine)).